A 380-amino-acid chain; its full sequence is Cytochrome b (380 aa).

The next 4 helical transmembrane spans lie at 34 to 54, 78 to 99, 114 to 134, and 179 to 199; these read FGSL…LLAM, WLIR…YLHI, WNTG…GYVL, and FFAL…IHLT. Residues H84 and H98 each contribute to the heme b site. Heme b-binding residues include H183 and H197. An a ubiquinone-binding site is contributed by H202. 4 helical membrane-spanning segments follow: residues 227-247, 289-309, 321-341, and 348-368; these read LKDF…ALFS, LGGV…PFLH, ISQL…WVGS, and FIII…ILFP.

It belongs to the cytochrome b family. As to quaternary structure, the cytochrome bc1 complex contains 11 subunits: 3 respiratory subunits (MT-CYB, CYC1 and UQCRFS1), 2 core proteins (UQCRC1 and UQCRC2) and 6 low-molecular weight proteins (UQCRH/QCR6, UQCRB/QCR7, UQCRQ/QCR8, UQCR10/QCR9, UQCR11/QCR10 and a cleavage product of UQCRFS1). This cytochrome bc1 complex then forms a dimer. The cofactor is heme b.

It localises to the mitochondrion inner membrane. In terms of biological role, component of the ubiquinol-cytochrome c reductase complex (complex III or cytochrome b-c1 complex) that is part of the mitochondrial respiratory chain. The b-c1 complex mediates electron transfer from ubiquinol to cytochrome c. Contributes to the generation of a proton gradient across the mitochondrial membrane that is then used for ATP synthesis. This is Cytochrome b (MT-CYB) from Pelecanoides urinatrix (Common diving petrel).